The following is a 385-amino-acid chain: MKLVRKDLEKDNAGQVTLIPEEPEDMWHTYNLLQVGDSLRASTIRKVQTESSTGSVGSNRIRTTLTLCVEAIDFDSQACQLRVKGTNIQENEYVKMGAYHTIELEPNRQFTLAKKQWDSVVLERIEQACDPAWNADVAAVVMQEGLAHVCLVTPSMTLTRAKVEVNIPRKRKGNCSQHDRALERFYEQVVQAIQRHINFEVVKCVLVASPGFVREQFCDYMFQQAVKTDNKLLLENRSKFLQVHSSSGHKYVLKEALCDPAVTSRLSDTKAAGEVKALDDFYKMLQHEPDRAFYGLKHVEKANEAMAIDTLLISDELFRHQDVATRARYVKLVDSVRENMGTVRIFSSLHVSGEQLGQLTGVAAILRFPVAELSDQEDESSSEED.

The protein belongs to the eukaryotic release factor 1 family. Pelota subfamily. Component of the Pelota-HBS1L complex, also named Dom34-Hbs1 complex, composed of PELO and HBS1L. It depends on a divalent metal cation as a cofactor.

The protein resides in the cytoplasm. Component of the Pelota-HBS1L complex, a complex that recognizes stalled ribosomes and triggers the No-Go Decay (NGD) pathway. In the Pelota-HBS1L complex, PELO recognizes ribosomes stalled at the 3' end of an mRNA and engages stalled ribosomes by destabilizing mRNA in the mRNA channel. Following mRNA extraction from stalled ribosomes by the SKI complex, the Pelota-HBS1L complex promotes recruitment of ABCE1, which drives the disassembly of stalled ribosomes, followed by degradation of damaged mRNAs as part of the NGD pathway. This chain is Protein pelota homolog (PELO), found in Gallus gallus (Chicken).